The chain runs to 120 residues: Membrane-anchored ubiquitin-fold protein 5 (120 aa).

The region spanning Ile7–Glu72 is the Ubiquitin-like domain. A lipid anchor (S-palmitoyl cysteine) is attached at Cys115. Cys117 carries the cysteine methyl ester modification. A lipid anchor (S-geranylgeranyl cysteine) is attached at Cys117. Positions Cys118–Leu120 are cleaved as a propeptide — removed in mature form.

As to expression, ubiquitous.

The protein localises to the cell membrane. Functionally, may serve as docking site to facilitate the association of other proteins to the plasma membrane. This chain is Membrane-anchored ubiquitin-fold protein 5 (MUB5), found in Arabidopsis thaliana (Mouse-ear cress).